The following is a 259-amino-acid chain: tRNA pseudouridine synthase A (259 aa).

Catalysis depends on Asp-51, which acts as the Nucleophile. Residue Tyr-109 participates in substrate binding.

The protein belongs to the tRNA pseudouridine synthase TruA family. In terms of assembly, homodimer.

It carries out the reaction uridine(38/39/40) in tRNA = pseudouridine(38/39/40) in tRNA. In terms of biological role, formation of pseudouridine at positions 38, 39 and 40 in the anticodon stem and loop of transfer RNAs. This Colwellia psychrerythraea (strain 34H / ATCC BAA-681) (Vibrio psychroerythus) protein is tRNA pseudouridine synthase A.